The chain runs to 268 residues: LOB domain-containing protein 13 (268 aa).

Positions 51-152 (TPCAACKLLR…SELTTVRTEI (102 aa)) constitute an LOB domain. A disordered region spans residues 191 to 268 (LLPPPPPPPP…SSDNNVHYFD (78 aa)). 2 stretches are compositionally biased toward pro residues: residues 192-205 (LPPPPPPPPTPRPP) and 212-222 (PAPPPTPPVSL). A compositionally biased stretch (low complexity) spans 223–243 (PSPSMVVSSSSSSNSSATNSM). Residues 250 to 268 (STAGYSNSLSSDNNVHYFD) show a composition bias toward polar residues.

The protein belongs to the LOB domain-containing protein family. As to expression, expressed in shoots and roots and at low levels in flowers, but not in leaves or inflorescence stems.

The protein is LOB domain-containing protein 13 (LBD13) of Arabidopsis thaliana (Mouse-ear cress).